A 518-amino-acid chain; its full sequence is U-box domain-containing protein 57 (518 aa).

A coiled-coil region spans residues 86–142 (EEVRKVHILEEEIVTLKHQADTYLVQKEKAVTAYDQLKHERDNAVQQVNELRDQSTH). Positions 159 to 409 (FKNAREVGDT…RPDLLNEVWI (251 aa)) constitute a Protein kinase domain. One can recognise a U-box domain in the interval 434–508 (SVPAAFICPI…HGYLQQQQPN (75 aa)).

The enzyme catalyses S-ubiquitinyl-[E2 ubiquitin-conjugating enzyme]-L-cysteine + [acceptor protein]-L-lysine = [E2 ubiquitin-conjugating enzyme]-L-cysteine + N(6)-ubiquitinyl-[acceptor protein]-L-lysine.. The protein operates within protein modification; protein ubiquitination. In terms of biological role, possesses E3 ubiquitin-protein ligase in vitro. May be involved in cell death signaling. The polypeptide is U-box domain-containing protein 57 (PUB57) (Oryza sativa subsp. japonica (Rice)).